Consider the following 219-residue polypeptide: Probable octanoyltransferase (219 aa).

The 177-residue stretch at 43–219 (QPPKPTIITS…NNLDSFLMSK (177 aa)) folds into the BPL/LPL catalytic domain. Substrate-binding positions include 83–90 (RGGQTTFH), 151–153 (AIG), and 164–166 (GLA). Cysteine 182 acts as the Acyl-thioester intermediate in catalysis.

Belongs to the LipB family.

The catalysed reaction is octanoyl-[ACP] + L-lysyl-[protein] = N(6)-octanoyl-L-lysyl-[protein] + holo-[ACP] + H(+). It functions in the pathway protein modification; protein lipoylation via endogenous pathway; protein N(6)-(lipoyl)lysine from octanoyl-[acyl-carrier-protein]: step 1/2. Catalyzes the transfer of endogenously produced octanoic acid from octanoyl-acyl-carrier-protein onto the lipoyl domains of lipoate-dependent enzymes. Lipoyl-ACP can also act as a substrate although octanoyl-ACP is likely to be the physiological substrate. This Schizosaccharomyces pombe (strain 972 / ATCC 24843) (Fission yeast) protein is Probable octanoyltransferase.